Here is a 526-residue protein sequence, read N- to C-terminus: ESX-1 secretion-associated protein EspB (526 aa).

Residues 1-23 (MSEELKYELPGLERKAHECESTR) are compositionally biased toward basic and acidic residues. Disordered stretches follow at residues 1–35 (MSEE…KPDE), 91–110 (RQMN…VPDM), and 271–526 (QIQE…GKQQ). Positions 303 to 328 (GGPGGPGSGSGGGSGGGASGGSGGGT) are enriched in gly residues. Residues 335–362 (PSTDPSMSPMSTNSAGEEQSSGSPSSGG) show a composition bias toward low complexity. Residues 363–387 (SSSGGSPSGGSPSGGGAPSSGGMPE) are compositionally biased toward gly residues. Residues 393–405 (DMPGGPDIPGLDD) are compositionally biased toward low complexity. Positions 413-429 (AGGGGGGGVGGGGGGGM) are enriched in gly residues. Residues 430-440 (PAAPLGPAVGA) are compositionally biased toward low complexity. Residues 451-484 (RGGGVGVPTGTGGGAGGMMGGGMGGMGAGHGQGQ) show a composition bias toward gly residues. The segment covering 485–508 (GKEKKRDPKLAPDEDLYTEDRAHS) has biased composition (basic and acidic residues).

This sequence belongs to the EspB family.

The protein resides in the secreted. Its function is as follows. Involved in DNA conjugation, at least in the recipient strain. The protein is ESX-1 secretion-associated protein EspB of Mycolicibacterium smegmatis (strain MKD8) (Mycobacterium smegmatis).